We begin with the raw amino-acid sequence, 382 residues long: Porin-like protein BU359 (382 aa).

The first 23 residues, 1-23 (MTNRKSLAMVIPMLLAASNGVNA), serve as a signal peptide directing secretion.

This sequence belongs to the Gram-negative porin family. Homotrimer.

The protein resides in the cell outer membrane. Forms pores that allow passive diffusion of small molecules across the membrane. The protein is Porin-like protein BU359 of Buchnera aphidicola subsp. Acyrthosiphon pisum (strain APS) (Acyrthosiphon pisum symbiotic bacterium).